A 440-amino-acid polypeptide reads, in one-letter code: Argininosuccinate lyase (440 aa).

Belongs to the lyase 1 family. Argininosuccinate lyase subfamily.

It localises to the cytoplasm. The catalysed reaction is 2-(N(omega)-L-arginino)succinate = fumarate + L-arginine. It functions in the pathway amino-acid biosynthesis; L-arginine biosynthesis; L-arginine from L-ornithine and carbamoyl phosphate: step 3/3. The sequence is that of Argininosuccinate lyase from Clostridium botulinum (strain Loch Maree / Type A3).